The following is a 254-amino-acid chain: Type III pantothenate kinase (254 aa).

7–14 contributes to the ATP binding site; sequence DIGNTRLK. Residues Tyr-97 and 104 to 107 contribute to the substrate site; that span reads GSDR. Asp-106 acts as the Proton acceptor in catalysis. Thr-134 is a binding site for ATP. Residue Thr-184 coordinates substrate.

This sequence belongs to the type III pantothenate kinase family. In terms of assembly, homodimer. It depends on NH4(+) as a cofactor. The cofactor is K(+).

The protein resides in the cytoplasm. It carries out the reaction (R)-pantothenate + ATP = (R)-4'-phosphopantothenate + ADP + H(+). It functions in the pathway cofactor biosynthesis; coenzyme A biosynthesis; CoA from (R)-pantothenate: step 1/5. Catalyzes the phosphorylation of pantothenate (Pan), the first step in CoA biosynthesis. This is Type III pantothenate kinase from Methylibium petroleiphilum (strain ATCC BAA-1232 / LMG 22953 / PM1).